Consider the following 48-residue polypeptide: ATP synthase protein 8 (48 aa).

A helical membrane pass occupies residues 12-32 (LLTFGMLAISMLLYLVSTIIL).

The protein belongs to the ATPase protein 8 family. In terms of assembly, F-type ATPases have 2 components, CF(1) - the catalytic core - and CF(0) - the membrane proton channel.

The protein resides in the mitochondrion membrane. Mitochondrial membrane ATP synthase (F(1)F(0) ATP synthase or Complex V) produces ATP from ADP in the presence of a proton gradient across the membrane which is generated by electron transport complexes of the respiratory chain. F-type ATPases consist of two structural domains, F(1) - containing the extramembraneous catalytic core and F(0) - containing the membrane proton channel, linked together by a central stalk and a peripheral stalk. During catalysis, ATP synthesis in the catalytic domain of F(1) is coupled via a rotary mechanism of the central stalk subunits to proton translocation. Part of the complex F(0) domain. Minor subunit located with subunit a in the membrane. The chain is ATP synthase protein 8 (ATP8) from Debaryomyces hansenii (strain ATCC 36239 / CBS 767 / BCRC 21394 / JCM 1990 / NBRC 0083 / IGC 2968) (Yeast).